We begin with the raw amino-acid sequence, 54 residues long: U7-ctenitoxin-Pk1a (54 aa).

Disulfide bonds link C3-C17, C10-C23, C14-C52, C16-C37, and C25-C35.

As to expression, expressed by the venom gland.

It is found in the secreted. Its function is as follows. Blocks voltage-gated sodium channels (Nav). Causes immediate spastic paralysis and death in mice within 1 minute of injection at dose levels of 1.5 ug per mouse. This chain is U7-ctenitoxin-Pk1a, found in Phoneutria keyserlingi (Brazilian wandering spider).